A 228-amino-acid chain; its full sequence is MAAAVEPEVEDPLWSFVRVLEKRDGTVLRLQQYGSGGVGCVVWDAAIVLSKYLETPGFSGDGAHALSRRSVLELGSGTGAVGLMAATLGADVIVTDLEELQDLLKMNIDMNKHLVTGSVQAKVLKWGEDIEDLMSPDYILMADCIYYEESLEPLLKTLKDLSGSETCIICCYEQRTMGKNPEIEKKYFELLQLDFDFEEIPLDKHDEEYRSEDIHIVYIRKKKPKPPS.

Alanine 2 bears the N-acetylalanine mark. S-adenosyl-L-methionine is bound by residues tryptophan 43, 75–77 (GSG), aspartate 96, tryptophan 126, alanine 142, and tyrosine 147.

It belongs to the methyltransferase superfamily. METTL21 family. As to quaternary structure, interacts with ALKBH6. Interacts with ASPSCR1 and UBXN6; interaction with ASPSCR1, but not with UBXN6, enhances VCP methylation. Widely expressed.

It localises to the cytoplasm. It carries out the reaction L-lysyl-[protein] + 3 S-adenosyl-L-methionine = N(6),N(6),N(6)-trimethyl-L-lysyl-[protein] + 3 S-adenosyl-L-homocysteine + 3 H(+). Its function is as follows. Protein N-lysine methyltransferase that specifically trimethylates 'Lys-315' of VCP/p97; this modification may decrease VCP ATPase activity. The sequence is that of Protein N-lysine methyltransferase METTL21D (Vcpkmt) from Mus musculus (Mouse).